The chain runs to 1477 residues: Alpha-1-inhibitor 3 (1477 aa).

The N-terminal stretch at 1 to 24 (MKKDREAQLCLFSALLAFLPFASL) is a signal peptide. The cysteines at positions 48 and 86 are disulfide-linked. Asparagine 55 and asparagine 247 each carry an N-linked (GlcNAc...) asparagine glycan. 2 disulfide bridges follow: cysteine 251-cysteine 295 and cysteine 269-cysteine 283. Residues asparagine 301, asparagine 321, asparagine 393, and asparagine 508 are each glycosylated (N-linked (GlcNAc...) asparagine). Cystine bridges form between cysteine 468-cysteine 563, cysteine 595-cysteine 774, and cysteine 643-cysteine 678. Residues 601–750 (DQSVLLQKPE…TWIWDLVTVN (150 aa)) are bait region (approximate). Asparagine 750, asparagine 777, and asparagine 872 each carry an N-linked (GlcNAc...) asparagine glycan. 4 disulfides stabilise this stretch: cysteine 850–cysteine 886, cysteine 924–cysteine 1324, cysteine 1082–cysteine 1130, and cysteine 1355–cysteine 1470. Positions 975–978 (CGEQ) form a cross-link, isoglutamyl cysteine thioester (Cys-Gln). N-linked (GlcNAc...) asparagine glycosylation is present at asparagine 994. N-linked (GlcNAc...) asparagine glycosylation is found at asparagine 1143, asparagine 1314, and asparagine 1427.

It belongs to the protease inhibitor I39 (alpha-2-macroglobulin) family. As to quaternary structure, monomer.

It is found in the secreted. Its function is as follows. Protease inhibitor with a wide spectrum of protein targets, which attaches through its thioester function. This is Alpha-1-inhibitor 3 (A1i3) from Rattus norvegicus (Rat).